Here is a 127-residue protein sequence, read N- to C-terminus: Major sperm protein 55/57 (127 aa).

Ala2 bears the N-acetylalanine mark. The MSP domain maps to 9–126; it reads DIQTQPGTKI…RRKNLPIEYN (118 aa).

As to expression, sperm.

The protein localises to the cell projection. It is found in the pseudopodium. It localises to the cytoplasm. Its subcellular location is the cytoskeleton. In terms of biological role, central component in molecular interactions underlying sperm crawling. Forms an extensive filament system that extends from sperm villipoda, along the leading edge of the pseudopod. The polypeptide is Major sperm protein 55/57 (msp-55) (Caenorhabditis elegans).